Here is a 210-residue protein sequence, read N- to C-terminus: ATP phosphoribosyltransferase (210 aa).

Belongs to the ATP phosphoribosyltransferase family. Short subfamily. In terms of assembly, heteromultimer composed of HisG and HisZ subunits.

The protein localises to the cytoplasm. It carries out the reaction 1-(5-phospho-beta-D-ribosyl)-ATP + diphosphate = 5-phospho-alpha-D-ribose 1-diphosphate + ATP. It participates in amino-acid biosynthesis; L-histidine biosynthesis; L-histidine from 5-phospho-alpha-D-ribose 1-diphosphate: step 1/9. Functionally, catalyzes the condensation of ATP and 5-phosphoribose 1-diphosphate to form N'-(5'-phosphoribosyl)-ATP (PR-ATP). Has a crucial role in the pathway because the rate of histidine biosynthesis seems to be controlled primarily by regulation of HisG enzymatic activity. In Petrotoga mobilis (strain DSM 10674 / SJ95), this protein is ATP phosphoribosyltransferase.